The chain runs to 215 residues: GTP-binding nuclear protein ran-1 (215 aa).

A Small GTPase Ran-type domain is found at 6–170 (GIPTFKLVLV…LWLARKLLGD (165 aa)). 17-24 (DGGTGKTT) is a GTP binding site. The interval 36 to 44 (KKYVATLGV) is switch-I. GTP is bound by residues Gly67, 121–124 (NKVD), and 149–151 (SAK). The segment at 67–83 (GQEKFGGLRDGYYIQGQ) is switch-II.

The protein belongs to the small GTPase superfamily. Ran family. In terms of assembly, found in a nuclear export complex with RanGTP, exportin and pre-miRNA.

The protein localises to the nucleus. It is found in the chromosome. Its subcellular location is the centromere. It localises to the kinetochore. Its function is as follows. Ran GTPase system comprises ran-1, ran-2 and ran-3 and is essential in nucleocytoplasmic transport. Ran-1 is a GTP-binding protein that mediates the interaction between mitotic chromosomes and kinetochore microtubules. Plays a crucial role in nuclear envelope assembly at the end of each cell division. Required for the import of protein into the nucleus and also for RNA export. RCC1 (ran-3)/Ran (ran-1) complex (together with other proteins) acts as a component of a signal transmission pathway that detects unreplicated DNA. This is GTP-binding nuclear protein ran-1 (ran-1) from Caenorhabditis elegans.